Consider the following 393-residue polypeptide: Serine/threonine-protein phosphatase 2A activator 1 (393 aa).

Residues Glu328 to Arg393 form a disordered region. Polar residues-rich tracts occupy residues Glu335–Ser356 and Ser365–Phe386. Ser341 is subject to Phosphoserine.

It belongs to the PTPA-type PPIase family. In terms of assembly, interacts with the phosphatase PP2A-like catalytic subunits PPG1, PPH3 and SIT4. Forms a ternary complex with SIT4-TAP42.

The protein localises to the cytoplasm. It is found in the nucleus. It catalyses the reaction [protein]-peptidylproline (omega=180) = [protein]-peptidylproline (omega=0). PPIases accelerate the folding of proteins. It catalyzes the cis-trans isomerization of proline imidic peptide bonds in oligopeptides. Acts as a regulatory subunit for TAP42-associated PP2A-like phosphatases modulating their activity or substrate specificity, probably by inducing a conformational change in the catalytic subunit, a direct target of the PPIase. Can reactivate inactive phosphatase PP2A-phosphatase methylesterase complexes (PP2Ai) in presence of ATP and Mg(2+) by dissociating the inactive form from the complex. Involved in the regulation of cell cycle progression, mitotic spindle formation, bud morphogenesis and DNA repair. The chain is Serine/threonine-protein phosphatase 2A activator 1 (RRD1) from Saccharomyces cerevisiae (strain ATCC 204508 / S288c) (Baker's yeast).